A 415-amino-acid chain; its full sequence is rRNA methyltransferase 3, mitochondrial (415 aa).

A mitochondrion-targeting transit peptide spans 1-47 (MAALCRGTVRACILKPLGLSVSLQVKRNVRALRRTPVRVLPAAEKGR). Residues 41–73 (PAAEKGRERKEVEARRPQQPRQSEYQTRTSQGV) are disordered. Positions 44-56 (EKGRERKEVEARR) are enriched in basic and acidic residues. Positions 59–73 (QPRQSEYQTRTSQGV) are enriched in polar residues. 3 residues coordinate S-adenosyl-L-methionine: Gly-357, Ile-381, and Leu-390.

The protein belongs to the class IV-like SAM-binding methyltransferase superfamily. RNA methyltransferase TrmH family.

It is found in the mitochondrion. The catalysed reaction is a uridine in rRNA + S-adenosyl-L-methionine = a 2'-O-methyluridine in rRNA + S-adenosyl-L-homocysteine + H(+). In terms of biological role, S-adenosyl-L-methionine-dependent 2'-O-ribose methyltransferase that catalyzes the formation of 2'-O-methylguanosine at position 1370 (Gm1370) in the mitochondrial large subunit ribosomal RNA (mtLSU rRNA), a conserved modification in the peptidyl transferase domain of the mtLSU rRNA. Also required for formation of 2'-O-methyluridine at position 1369 (Um1369) mediated by MRM2. The polypeptide is rRNA methyltransferase 3, mitochondrial (Xenopus tropicalis (Western clawed frog)).